Here is a 130-residue protein sequence, read N- to C-terminus: Small ribosomal subunit protein uS11 (130 aa).

The protein belongs to the universal ribosomal protein uS11 family. In terms of assembly, part of the 30S ribosomal subunit. Interacts with proteins S7 and S18. Binds to IF-3.

Its function is as follows. Located on the platform of the 30S subunit, it bridges several disparate RNA helices of the 16S rRNA. Forms part of the Shine-Dalgarno cleft in the 70S ribosome. This is Small ribosomal subunit protein uS11 from Ruegeria pomeroyi (strain ATCC 700808 / DSM 15171 / DSS-3) (Silicibacter pomeroyi).